The primary structure comprises 361 residues: Glutaminyl-peptide cyclotransferase (361 aa).

The N-terminal stretch at 1–28 (MAGGRHRRVVGTLHLLLLVAALPWASRG) is a signal peptide. Asparagine 49 carries N-linked (GlcNAc...) asparagine glycosylation. Cysteine 139 and cysteine 164 are disulfide-bonded. Aspartate 159 lines the Zn(2+) pocket. Catalysis depends on glutamate 201, which acts as the Proton acceptor. Position 202 (glutamate 202) interacts with Zn(2+). The active-site Proton acceptor is the aspartate 248. The N-linked (GlcNAc...) asparagine glycan is linked to asparagine 296. Histidine 330 lines the Zn(2+) pocket.

Belongs to the glutaminyl-peptide cyclotransferase family.

Its subcellular location is the secreted. It catalyses the reaction N-terminal L-glutaminyl-[peptide] = N-terminal 5-oxo-L-prolyl-[peptide] + NH4(+). Its function is as follows. Responsible for the biosynthesis of pyroglutamyl peptides. Has a bias against acidic and tryptophan residues adjacent to the N-terminal glutaminyl residue and a lack of importance of chain length after the second residue. Also catalyzes N-terminal pyroglutamate formation. In vitro, catalyzes pyroglutamate formation of N-terminally truncated form of APP amyloid-beta peptides [Glu-3]-amyloid-beta. May be involved in the N-terminal pyroglutamate formation of several amyloid-related plaque-forming peptides. This is Glutaminyl-peptide cyclotransferase (QPCT) from Homo sapiens (Human).